Reading from the N-terminus, the 558-residue chain is Germacrene A synthase short form (558 aa).

Positions 311, 315, 455, 459, and 463 each coordinate Mg(2+). A DDXXD motif motif is present at residues 311–315; that stretch reads DDTYD.

The protein belongs to the terpene synthase family. Mg(2+) serves as cofactor. Expressed in roots and in green and etiolated seedlings.

The catalysed reaction is (2E,6E)-farnesyl diphosphate = (+)-(R)-germacrene A + diphosphate. It participates in secondary metabolite biosynthesis; terpenoid biosynthesis. Functionally, involved in sesquiterpene lactone biosynthesis. Produces exclusively (+)-germacrene A. The sequence is that of Germacrene A synthase short form from Cichorium intybus (Chicory).